The primary structure comprises 351 residues: Dihydroorotate dehydrogenase (quinone) (351 aa).

FMN is bound by residues 67–71 and Thr91; that span reads AGFDK. Substrate is bound at residue Lys71. 116-120 contributes to the substrate binding site; the sequence is NAMGF. 2 residues coordinate FMN: Asn145 and Asn178. Asn178 is a substrate binding site. Catalysis depends on Ser181, which acts as the Nucleophile. Asn183 contacts substrate. The FMN site is built by Lys214 and Thr242. 243-244 contributes to the substrate binding site; sequence NT. FMN is bound by residues Gly262, Gly291, and 312–313; that span reads YS.

This sequence belongs to the dihydroorotate dehydrogenase family. Type 2 subfamily. In terms of assembly, monomer. The cofactor is FMN.

The protein resides in the cell membrane. It carries out the reaction (S)-dihydroorotate + a quinone = orotate + a quinol. It participates in pyrimidine metabolism; UMP biosynthesis via de novo pathway; orotate from (S)-dihydroorotate (quinone route): step 1/1. In terms of biological role, catalyzes the conversion of dihydroorotate to orotate with quinone as electron acceptor. This Helicobacter pylori (strain G27) protein is Dihydroorotate dehydrogenase (quinone).